The sequence spans 1013 residues: Mediator of RNA polymerase II transcription subunit 5 (1013 aa).

The protein belongs to the Mediator complex subunit 5 family. In terms of assembly, component of the Mediator complex.

It localises to the nucleus. In terms of biological role, component of the Mediator complex, a coactivator involved in the regulated transcription of nearly all RNA polymerase II-dependent genes. Mediator functions as a bridge to convey information from gene-specific regulatory proteins to the basal RNA polymerase II transcription machinery. Mediator is recruited to promoters by direct interactions with regulatory proteins and serves as a scaffold for the assembly of a functional preinitiation complex with RNA polymerase II and the general transcription factors. The chain is Mediator of RNA polymerase II transcription subunit 5 (NUT1) from Aspergillus oryzae (strain ATCC 42149 / RIB 40) (Yellow koji mold).